We begin with the raw amino-acid sequence, 110 residues long: uncharacterized protein (110 aa).

The stretch at 16 to 46 forms a coiled coil; that stretch reads ELDKLRECEERLSVIEKQKQSSKQESEETYI. Positions 85-96 are enriched in basic and acidic residues; that stretch reads EEKDKKCQRKPE. The tract at residues 85–110 is disordered; that stretch reads EEKDKKCQRKPEAPSTPAVTIRSKRQ.

This is an uncharacterized protein from Bacillus subtilis (strain 168).